The chain runs to 349 residues: Phosphoribosylformylglycinamidine cyclo-ligase (349 aa).

The protein belongs to the AIR synthase family.

It localises to the cytoplasm. The enzyme catalyses 2-formamido-N(1)-(5-O-phospho-beta-D-ribosyl)acetamidine + ATP = 5-amino-1-(5-phospho-beta-D-ribosyl)imidazole + ADP + phosphate + H(+). The protein operates within purine metabolism; IMP biosynthesis via de novo pathway; 5-amino-1-(5-phospho-D-ribosyl)imidazole from N(2)-formyl-N(1)-(5-phospho-D-ribosyl)glycinamide: step 2/2. The protein is Phosphoribosylformylglycinamidine cyclo-ligase of Bordetella petrii (strain ATCC BAA-461 / DSM 12804 / CCUG 43448).